A 332-amino-acid polypeptide reads, in one-letter code: L-lactate dehydrogenase A chain (332 aa).

Residues 29-57 (GAVG…VEDK) and Arg-99 contribute to the NAD(+) site. Substrate is bound by residues Arg-106, Asn-138, and Arg-169. Asn-138 lines the NAD(+) pocket. His-193 functions as the Proton acceptor in the catalytic mechanism. Thr-248 provides a ligand contact to substrate.

Belongs to the LDH/MDH superfamily. LDH family. In terms of assembly, homotetramer.

The protein localises to the cytoplasm. The enzyme catalyses (S)-lactate + NAD(+) = pyruvate + NADH + H(+). Its pathway is fermentation; pyruvate fermentation to lactate; (S)-lactate from pyruvate: step 1/1. In terms of biological role, interconverts simultaneously and stereospecifically pyruvate and lactate with concomitant interconversion of NADH and NAD(+). This is L-lactate dehydrogenase A chain (LDHA) from Gallus gallus (Chicken).